Here is a 126-residue protein sequence, read N- to C-terminus: Large ribosomal subunit protein bL19 (126 aa).

This sequence belongs to the bacterial ribosomal protein bL19 family.

This protein is located at the 30S-50S ribosomal subunit interface and may play a role in the structure and function of the aminoacyl-tRNA binding site. The polypeptide is Large ribosomal subunit protein bL19 (Gluconacetobacter diazotrophicus (strain ATCC 49037 / DSM 5601 / CCUG 37298 / CIP 103539 / LMG 7603 / PAl5)).